The sequence spans 101 residues: NAD(P)H-quinone oxidoreductase subunit 4L, chloroplastic (101 aa).

Transmembrane regions (helical) follow at residues Met2 to Ile22, Met32 to Phe52, and Ile61 to Val81.

It belongs to the complex I subunit 4L family. In terms of assembly, NDH is composed of at least 16 different subunits, 5 of which are encoded in the nucleus.

It is found in the plastid. Its subcellular location is the chloroplast thylakoid membrane. The enzyme catalyses a plastoquinone + NADH + (n+1) H(+)(in) = a plastoquinol + NAD(+) + n H(+)(out). It carries out the reaction a plastoquinone + NADPH + (n+1) H(+)(in) = a plastoquinol + NADP(+) + n H(+)(out). In terms of biological role, NDH shuttles electrons from NAD(P)H:plastoquinone, via FMN and iron-sulfur (Fe-S) centers, to quinones in the photosynthetic chain and possibly in a chloroplast respiratory chain. The immediate electron acceptor for the enzyme in this species is believed to be plastoquinone. Couples the redox reaction to proton translocation, and thus conserves the redox energy in a proton gradient. This Calycanthus floridus var. glaucus (Eastern sweetshrub) protein is NAD(P)H-quinone oxidoreductase subunit 4L, chloroplastic.